A 137-amino-acid chain; its full sequence is Putative pre-16S rRNA nuclease (137 aa).

This sequence belongs to the YqgF nuclease family.

Its subcellular location is the cytoplasm. Functionally, could be a nuclease involved in processing of the 5'-end of pre-16S rRNA. The protein is Putative pre-16S rRNA nuclease of Bacillus cereus (strain B4264).